Here is a 687-residue protein sequence, read N- to C-terminus: Polyphosphate kinase (687 aa).

An ATP-binding site is contributed by N45. The Mg(2+) site is built by R375 and R405. The active-site Phosphohistidine intermediate is the H435. Residues Y472, R568, and H596 each contribute to the ATP site.

It belongs to the polyphosphate kinase 1 (PPK1) family. Requires Mg(2+) as cofactor. In terms of processing, an intermediate of this reaction is the autophosphorylated ppk in which a phosphate is covalently linked to a histidine residue through a N-P bond.

The catalysed reaction is [phosphate](n) + ATP = [phosphate](n+1) + ADP. Catalyzes the reversible transfer of the terminal phosphate of ATP to form a long-chain polyphosphate (polyP). The chain is Polyphosphate kinase from Burkholderia cenocepacia (strain HI2424).